We begin with the raw amino-acid sequence, 183 residues long: Small ribosomal subunit protein cS23y (183 aa).

Belongs to the chloroplast-specific ribosomal protein cS23 family. Part of the 30S ribosomal subunit.

Its subcellular location is the plastid. It is found in the chloroplast. Its function is as follows. Component of the chloroplast ribosome (chloro-ribosome), a dedicated translation machinery responsible for the synthesis of chloroplast genome-encoded proteins, including proteins of the transcription and translation machinery and components of the photosynthetic apparatus. The chain is Small ribosomal subunit protein cS23y from Arabidopsis thaliana (Mouse-ear cress).